Consider the following 457-residue polypeptide: Embryogenesis-associated protein EMB8 (457 aa).

Positions 39–59 (KKPAAGACEEQDELTSGSAAR) are disordered. Residues 151-391 (PVLILLPGLT…LVVTPNGGHL (241 aa)) enclose the AB hydrolase-1 domain. Residues serine 231, aspartate 361, and histidine 390 each act as charge relay system in the active site. Residues 438–447 (VDSVHTRETN) show a composition bias toward basic and acidic residues. A disordered region spans residues 438–457 (VDSVHTRETNNYKSPIENVN). Residues 448–457 (NYKSPIENVN) show a composition bias toward polar residues.

Belongs to the AB hydrolase superfamily. AB hydrolase 4 family.

This Picea glauca (White spruce) protein is Embryogenesis-associated protein EMB8 (EMB8).